Consider the following 202-residue polypeptide: Pyridoxal 5'-phosphate synthase subunit PdxT (202 aa).

L-glutamine is bound at residue 49–51 (GES). Cys81 serves as the catalytic Nucleophile. Residues Arg110 and 139 to 140 (IR) contribute to the L-glutamine site. Active-site charge relay system residues include His182 and Glu184.

The protein belongs to the glutaminase PdxT/SNO family. In terms of assembly, in the presence of PdxS, forms a dodecamer of heterodimers. Only shows activity in the heterodimer.

The catalysed reaction is aldehydo-D-ribose 5-phosphate + D-glyceraldehyde 3-phosphate + L-glutamine = pyridoxal 5'-phosphate + L-glutamate + phosphate + 3 H2O + H(+). It carries out the reaction L-glutamine + H2O = L-glutamate + NH4(+). It functions in the pathway cofactor biosynthesis; pyridoxal 5'-phosphate biosynthesis. Catalyzes the hydrolysis of glutamine to glutamate and ammonia as part of the biosynthesis of pyridoxal 5'-phosphate. The resulting ammonia molecule is channeled to the active site of PdxS. The protein is Pyridoxal 5'-phosphate synthase subunit PdxT of Rhodococcus opacus (strain B4).